The primary structure comprises 328 residues: DNA-directed RNA polymerase subunit alpha (328 aa).

Residues 1-244 form an alpha N-terminal domain (alpha-NTD) region; it reads MEKFLKYEIK…EHLNPIVSVN (244 aa). The segment at 261–328 is alpha C-terminal domain (alpha-CTD); that stretch reads KVKSFAKQIE…VQELGLKFRS (68 aa).

The protein belongs to the RNA polymerase alpha chain family. As to quaternary structure, homodimer. The RNAP catalytic core consists of 2 alpha, 1 beta, 1 beta' and 1 omega subunit. When a sigma factor is associated with the core the holoenzyme is formed, which can initiate transcription.

It catalyses the reaction RNA(n) + a ribonucleoside 5'-triphosphate = RNA(n+1) + diphosphate. DNA-dependent RNA polymerase catalyzes the transcription of DNA into RNA using the four ribonucleoside triphosphates as substrates. This is DNA-directed RNA polymerase subunit alpha from Mycoplasma genitalium (strain ATCC 33530 / DSM 19775 / NCTC 10195 / G37) (Mycoplasmoides genitalium).